The sequence spans 271 residues: 3-methyl-2-oxobutanoate hydroxymethyltransferase (271 aa).

Residues Asp49 and Asp88 each contribute to the Mg(2+) site. 3-methyl-2-oxobutanoate-binding positions include 49-50 (DS), Asp88, and Lys118. Glu120 lines the Mg(2+) pocket. Glu187 serves as the catalytic Proton acceptor.

Belongs to the PanB family. As to quaternary structure, homodecamer; pentamer of dimers. Mg(2+) serves as cofactor.

It is found in the cytoplasm. It carries out the reaction 3-methyl-2-oxobutanoate + (6R)-5,10-methylene-5,6,7,8-tetrahydrofolate + H2O = 2-dehydropantoate + (6S)-5,6,7,8-tetrahydrofolate. It functions in the pathway cofactor biosynthesis; (R)-pantothenate biosynthesis; (R)-pantoate from 3-methyl-2-oxobutanoate: step 1/2. In terms of biological role, catalyzes the reversible reaction in which hydroxymethyl group from 5,10-methylenetetrahydrofolate is transferred onto alpha-ketoisovalerate to form ketopantoate. This Bartonella tribocorum (strain CIP 105476 / IBS 506) protein is 3-methyl-2-oxobutanoate hydroxymethyltransferase.